Consider the following 808-residue polypeptide: ATP-dependent 6-phosphofructokinase (808 aa).

The disordered stretch occupies residues 1–21 (MSSTQAPVEPPKRRRIGVLTS). The tract at residues 1–389 (MSSTQAPVEP…YHFAYRNTAT (389 aa)) is N-terminal catalytic PFK domain 1. ATP is bound by residues G23, 86-87 (RS), and 116-119 (GDGS). D117 provides a ligand contact to Mg(2+). Substrate-binding positions include 162–164 (SID), R199, 206–208 (MGR), E263, R291, and 297–300 (HTQR). D164 functions as the Proton acceptor in the catalytic mechanism. The interval 390 to 403 (PDHPKMILPQDKRM) is interdomain linker. Positions 404-808 (RIAIIHVGAP…DIDPSALTSS (405 aa)) are C-terminal regulatory PFK domain 2. Beta-D-fructose 2,6-bisphosphate contacts are provided by residues R480, 537–541 (TISNN), R575, 582–584 (QGG), E642, R668, 674–677 (HFQQ), and R749.

The protein belongs to the phosphofructokinase type A (PFKA) family. ATP-dependent PFK group I subfamily. Eukaryotic two domain clade 'E' sub-subfamily. Homotetramer. Mg(2+) is required as a cofactor.

Its subcellular location is the cytoplasm. The enzyme catalyses beta-D-fructose 6-phosphate + ATP = beta-D-fructose 1,6-bisphosphate + ADP + H(+). It participates in carbohydrate degradation; glycolysis; D-glyceraldehyde 3-phosphate and glycerone phosphate from D-glucose: step 3/4. With respect to regulation, allosterically activated by ADP, AMP, or fructose 2,6-bisphosphate, and allosterically inhibited by ATP or citrate. Its function is as follows. Catalyzes the phosphorylation of D-fructose 6-phosphate to fructose 1,6-bisphosphate by ATP, the first committing step of glycolysis. The sequence is that of ATP-dependent 6-phosphofructokinase (pfkA) from Aspergillus fumigatus (strain ATCC MYA-4609 / CBS 101355 / FGSC A1100 / Af293) (Neosartorya fumigata).